The sequence spans 628 residues: Growth hormone receptor (628 aa).

The N-terminal stretch at 1–18 (MDLWQLLLTLAVVGSSNA) is a signal peptide. Topologically, residues 19 to 266 (FVGREAVTVT…FTCEEEFQFP (248 aa)) are extracellular. Residues asparagine 33, asparagine 40, and asparagine 46 are each glycosylated (N-linked (GlcNAc...) asparagine). 2 disulfides stabilise this stretch: cysteine 56/cysteine 66 and cysteine 101/cysteine 112. N-linked (GlcNAc...) asparagine glycosylation occurs at asparagine 115. A disulfide bond links cysteine 126 and cysteine 140. One can recognise a Fibronectin type-III domain in the interval 151–254 (PPTGLNWTLM…EILYITLPQS (104 aa)). N-linked (GlcNAc...) asparagine glycans are attached at residues asparagine 156, asparagine 161, and asparagine 200. The WSXWS motif motif lies at 240 to 244 (YGEFS). Residues 267-287 (WFLIMIFGIFGLTVMLLVVMF) form a helical membrane-spanning segment. At 288-628 (SKQQRIKMLI…STDQLNKIML (341 aa)) the chain is on the cytoplasmic side. Residues 294–379 (KMLILPPVPV…HQKSLNILGA (86 aa)) form a required for JAK2 binding region. Residues 297–305 (ILPPVPVPK) carry the Box 1 motif motif. Positions 340–349 (DSWVEFIELD) match the UbE motif motif. Serine 341 carries the post-translational modification Phosphoserine. Tyrosine 483 and tyrosine 585 each carry phosphotyrosine.

Belongs to the type I cytokine receptor family. Type 1 subfamily. As to quaternary structure, on growth hormone (GH) binding, forms homodimers and binds JAK2 via a box 1-containing domain. The soluble form (GHBP) is produced by phorbol ester-promoted proteolytic cleavage at the cell surface (shedding) by ADAM17/TACE. Shedding is inhibited by growth hormone (GH) binding to the receptor probably due to a conformational change in GHR rendering the receptor inaccessible to ADAM17. Post-translationally, on GH binding, phosphorylated on tyrosine residues in the cytoplasmic domain by JAK2. In terms of processing, ubiquitinated by the ECS(SOCS2) complex following ligand-binding and phosphorylation by JAK2, leading to its degradation by the proteasome. Regulation by the ECS(SOCS2) complex acts as a negative feedback loop of growth hormone receptor signaling. Ubiquitination is not sufficient for GHR internalization.

The protein resides in the cell membrane. It is found in the secreted. Its function is as follows. Receptor for pituitary gland growth hormone (GH1) involved in regulating postnatal body growth. On ligand binding, couples to the JAK2/STAT5 pathway. In terms of biological role, the soluble form (GHBP) acts as a reservoir of growth hormone in plasma and may be a modulator/inhibitor of GH signaling. The chain is Growth hormone receptor (GHR) from Cavia porcellus (Guinea pig).